Here is a 316-residue protein sequence, read N- to C-terminus: Ferrochelatase (316 aa).

Fe cation contacts are provided by histidine 186 and glutamate 268.

Belongs to the ferrochelatase family.

It is found in the cytoplasm. The catalysed reaction is heme b + 2 H(+) = protoporphyrin IX + Fe(2+). It participates in porphyrin-containing compound metabolism; protoheme biosynthesis; protoheme from protoporphyrin-IX: step 1/1. Its function is as follows. Catalyzes the ferrous insertion into protoporphyrin IX. This is Ferrochelatase from Deinococcus radiodurans (strain ATCC 13939 / DSM 20539 / JCM 16871 / CCUG 27074 / LMG 4051 / NBRC 15346 / NCIMB 9279 / VKM B-1422 / R1).